A 439-amino-acid polypeptide reads, in one-letter code: Xylose isomerase (439 aa).

Catalysis depends on residues histidine 101 and aspartate 104. Mg(2+) contacts are provided by glutamate 232, glutamate 268, histidine 271, aspartate 296, aspartate 307, aspartate 309, and aspartate 339.

Belongs to the xylose isomerase family. As to quaternary structure, homotetramer. Mg(2+) serves as cofactor.

It is found in the cytoplasm. The enzyme catalyses alpha-D-xylose = alpha-D-xylulofuranose. This is Xylose isomerase from Haemophilus influenzae (strain PittGG).